We begin with the raw amino-acid sequence, 218 residues long: Guanylate kinase (218 aa).

The Guanylate kinase-like domain maps to 17-196 (GVLLALSSPS…ALEKLNEILH (180 aa)). 24-31 (SPSGAGKT) provides a ligand contact to ATP.

Belongs to the guanylate kinase family.

It localises to the cytoplasm. The catalysed reaction is GMP + ATP = GDP + ADP. Functionally, essential for recycling GMP and indirectly, cGMP. The protein is Guanylate kinase of Maricaulis maris (strain MCS10) (Caulobacter maris).